A 513-amino-acid polypeptide reads, in one-letter code: Maturase K (513 aa).

This sequence belongs to the intron maturase 2 family. MatK subfamily.

The protein localises to the plastid. Its subcellular location is the chloroplast. Usually encoded in the trnK tRNA gene intron. Probably assists in splicing its own and other chloroplast group II introns. The protein is Maturase K of Zea mays (Maize).